The sequence spans 306 residues: Oxygen-dependent coproporphyrinogen-III oxidase (306 aa).

Serine 94 provides a ligand contact to substrate. A divalent metal cation-binding residues include histidine 98 and histidine 108. Catalysis depends on histidine 108, which acts as the Proton donor. Residue 110–112 (NVR) coordinates substrate. The a divalent metal cation site is built by histidine 147 and histidine 177. The segment at 242–277 (YVEFNLVYDRGTLFGLQTGGRTESILMSMPPLVRWQ) is important for dimerization. A substrate-binding site is contributed by 260-262 (GGR).

Belongs to the aerobic coproporphyrinogen-III oxidase family. Homodimer. Requires a divalent metal cation as cofactor.

Its subcellular location is the cytoplasm. The enzyme catalyses coproporphyrinogen III + O2 + 2 H(+) = protoporphyrinogen IX + 2 CO2 + 2 H2O. It participates in porphyrin-containing compound metabolism; protoporphyrin-IX biosynthesis; protoporphyrinogen-IX from coproporphyrinogen-III (O2 route): step 1/1. Functionally, involved in the heme biosynthesis. Catalyzes the aerobic oxidative decarboxylation of propionate groups of rings A and B of coproporphyrinogen-III to yield the vinyl groups in protoporphyrinogen-IX. This is Oxygen-dependent coproporphyrinogen-III oxidase from Shewanella sediminis (strain HAW-EB3).